Consider the following 585-residue polypeptide: PiggyBac transposable element-derived protein 4 (585 aa).

Residues 1–73 are disordered; that stretch reads MSNPRKRSIP…STSSDSGRSM (73 aa). A compositionally biased stretch (acidic residues) spans 25 to 40; the sequence is DSFDESDFSEIDDSDN. A compositionally biased stretch (basic and acidic residues) spans 47 to 61; that stretch reads EADKIRPLSHLESDG. Positions 62-72 are enriched in low complexity; sequence KSSTSSDSGRS.

The chain is PiggyBac transposable element-derived protein 4 (PGBD4) from Homo sapiens (Human).